A 233-amino-acid chain; its full sequence is Small ribosomal subunit protein uS3 (233 aa).

In terms of domain architecture, KH type-2 spans 39-107 (IRAFLKRKLY…DVNINIKEER (69 aa)). Residues 212–222 (MQPEKTEESAP) show a composition bias toward basic and acidic residues. Residues 212-233 (MQPEKTEESAPAKKSRRTRRGK) are disordered. Residues 224–233 (KKSRRTRRGK) show a composition bias toward basic residues.

It belongs to the universal ribosomal protein uS3 family. As to quaternary structure, part of the 30S ribosomal subunit. Forms a tight complex with proteins S10 and S14.

Binds the lower part of the 30S subunit head. Binds mRNA in the 70S ribosome, positioning it for translation. The protein is Small ribosomal subunit protein uS3 of Campylobacter jejuni subsp. doylei (strain ATCC BAA-1458 / RM4099 / 269.97).